A 1903-amino-acid chain; its full sequence is Plexin-A4 (1903 aa).

Positions 1 to 26 (MAFHNRRWNFTFSCCVVVLLLPLVAA) are cleaved as a signal peptide. One can recognise a Sema domain in the interval 27-515 (RPQQPSAATR…SESQLTRVPV (489 aa)). At 27 to 1246 (RPQQPSAATR…ITSDSPLSST (1220 aa)) the chain is on the extracellular side. Intrachain disulfides connect cysteine 97-cysteine 106 and cysteine 132-cysteine 140. Asparagine 166 is a glycosylation site (N-linked (GlcNAc...) asparagine). 3 disulfide bridges follow: cysteine 291/cysteine 413, cysteine 307/cysteine 364, and cysteine 382/cysteine 401. N-linked (GlcNAc...) asparagine glycosylation occurs at asparagine 450. One can recognise a PSI 1 domain in the interval 517–567 (ACEQYSSCNECLGSGDPHCGWCVLHSMCTRKEKCERSSEPRRFASNIKQCV). 4 disulfides stabilise this stretch: cysteine 518–cysteine 535, cysteine 524–cysteine 566, cysteine 527–cysteine 544, and cysteine 538–cysteine 550. N-linked (GlcNAc...) asparagine glycosylation is found at asparagine 575 and asparagine 600. Cysteine 601 and cysteine 620 are joined by a disulfide. N-linked (GlcNAc...) asparagine glycans are attached at residues asparagine 656, asparagine 663, asparagine 764, and asparagine 772. The region spanning 663-710 (NCSVHKSCLSCVGSPYQCHWCKYRHTCTHDPSSCSFQEGRVKQPEECP) is the PSI 2 domain. Residues 811-864 (KCDARRESCGLCLKADPLFGCVWCKGENRCSLKQHCSYPQSMWLEHNGINSKCT) enclose the PSI 3 domain. IPT/TIG domains are found at residues 866-960 (PRIT…YYFV), 962-1046 (PQLL…FEYV), 1049-1148 (PTIT…FVYY), and 1151-1246 (PVFE…LSST). Asparagine 981, asparagine 992, asparagine 1025, asparagine 1141, asparagine 1189, and asparagine 1214 each carry an N-linked (GlcNAc...) asparagine glycan. The helical transmembrane segment at 1247–1267 (AVISIAGAGGLLIFFIVIVLI) threads the bilayer. At 1268–1903 (AYKRKSRESD…QVVAFMSLES (636 aa)) the chain is on the cytoplasmic side.

The protein belongs to the plexin family.

The protein resides in the cell membrane. Functionally, involved in the development of primary sensory neurons especially in branching of the peripheral axons. Interacts with the SLIT2 signaling specifically to promote axonal branching of Rohon-Beard neurons and the trigeminal sensory ganglion neurons. The protein is Plexin-A4 (plxna4) of Danio rerio (Zebrafish).